A 286-amino-acid chain; its full sequence is 2-hydroxy-6-oxo-6-phenylhexa-2,4-dienoate hydrolase (286 aa).

Substrate contacts are provided by residues 42–43 (GG), Asn51, Asn111, Thr180, and Arg190. Residue His265 is the Proton acceptor of the active site. Trp266 contributes to the substrate binding site.

The protein belongs to the AB hydrolase superfamily. BphD family. Homodimer.

It catalyses the reaction 2,6-dioxo-6-phenylhexa-3-enoate + H2O = 2-oxopent-4-enoate + benzoate + H(+). Its pathway is xenobiotic degradation; biphenyl degradation; 2-hydroxy-2,4-pentadienoate and benzoate from biphenyl: step 4/4. Its function is as follows. Catalyzes an unusual C-C bond hydrolysis of 2-hydroxy-6-oxo-6-phenylhexa-2,4-dienoic acid (HOPDA) to produce benzoic acid and 2-hydroxy-2,4-pentadienoic acid (HPD). The chain is 2-hydroxy-6-oxo-6-phenylhexa-2,4-dienoate hydrolase from Comamonas testosteroni (Pseudomonas testosteroni).